The following is a 278-amino-acid chain: 2-heptyl-3-hydroxy-4-quinolone dioxygenase AqdC1 (278 aa).

The AB hydrolase-1 domain maps to 29–158 (PTIVMLPGWC…GWVDSCRALF (130 aa)). Residue histidine 103 coordinates substrate. The active-site Proton donor/acceptor is histidine 250.

It belongs to the AB hydrolase superfamily.

It catalyses the reaction 2-heptyl-3-hydroxy-4(1H)-quinolone + O2 = N-octanoylanthranilate + CO + H(+). Involved in the degradation of the Pseudomonas aeruginosa quorum sensing signal molecules HHQ (2-heptyl-4-quinolone) and PQS (2-heptyl-3-hydroxy-4-quinolone) to anthranilic acid. Catalyzes the cleavage of PQS to form N-octanoylanthranilic acid and carbon monoxide. The sequence is that of 2-heptyl-3-hydroxy-4-quinolone dioxygenase AqdC1 from Rhodococcus erythropolis (Arthrobacter picolinophilus).